A 141-amino-acid polypeptide reads, in one-letter code: MADKKVVGVIKLQIQAGAANPAPPVGPALGQHGVNIMEFCKAYNAATESQKGNVIPVEISVYEDRSFTFVLKTPPVVELIKKAARISKGSPTPHNLKVAQITPEQVKSIAEAKMVDLNANDIDAASKIVRGTARSMGVTVA.

It belongs to the universal ribosomal protein uL11 family. As to quaternary structure, part of the ribosomal stalk of the 50S ribosomal subunit. Interacts with L10 and the large rRNA to form the base of the stalk. L10 forms an elongated spine to which L12 dimers bind in a sequential fashion forming a multimeric L10(L12)X complex. Post-translationally, one or more lysine residues are methylated.

Forms part of the ribosomal stalk which helps the ribosome interact with GTP-bound translation factors. This chain is Large ribosomal subunit protein uL11, found in Tropheryma whipplei (strain TW08/27) (Whipple's bacillus).